Reading from the N-terminus, the 689-residue chain is DNA ligase (689 aa).

Residues 58-62 (DQEYD), 107-108 (SL), and Glu-138 each bind NAD(+). Residue Lys-140 is the N6-AMP-lysine intermediate of the active site. NAD(+) is bound by residues Arg-161, Glu-198, Lys-314, and Lys-338. Cys-432, Cys-435, Cys-448, and Cys-453 together coordinate Zn(2+). One can recognise a BRCT domain in the interval 611-689 (ASSGTLSGKT…QELLEMLHGG (79 aa)).

It belongs to the NAD-dependent DNA ligase family. LigA subfamily. Requires Mg(2+) as cofactor. Mn(2+) serves as cofactor.

The catalysed reaction is NAD(+) + (deoxyribonucleotide)n-3'-hydroxyl + 5'-phospho-(deoxyribonucleotide)m = (deoxyribonucleotide)n+m + AMP + beta-nicotinamide D-nucleotide.. Its function is as follows. DNA ligase that catalyzes the formation of phosphodiester linkages between 5'-phosphoryl and 3'-hydroxyl groups in double-stranded DNA using NAD as a coenzyme and as the energy source for the reaction. It is essential for DNA replication and repair of damaged DNA. This is DNA ligase from Methylacidiphilum infernorum (isolate V4) (Methylokorus infernorum (strain V4)).